The primary structure comprises 568 residues: 2-succinyl-5-enolpyruvyl-6-hydroxy-3-cyclohexene-1-carboxylate synthase (568 aa).

Belongs to the TPP enzyme family. MenD subfamily. In terms of assembly, homodimer. Requires Mg(2+) as cofactor. It depends on Mn(2+) as a cofactor. Thiamine diphosphate serves as cofactor.

It carries out the reaction isochorismate + 2-oxoglutarate + H(+) = 5-enolpyruvoyl-6-hydroxy-2-succinyl-cyclohex-3-ene-1-carboxylate + CO2. It participates in quinol/quinone metabolism; 1,4-dihydroxy-2-naphthoate biosynthesis; 1,4-dihydroxy-2-naphthoate from chorismate: step 2/7. The protein operates within quinol/quinone metabolism; menaquinone biosynthesis. Catalyzes the thiamine diphosphate-dependent decarboxylation of 2-oxoglutarate and the subsequent addition of the resulting succinic semialdehyde-thiamine pyrophosphate anion to isochorismate to yield 2-succinyl-5-enolpyruvyl-6-hydroxy-3-cyclohexene-1-carboxylate (SEPHCHC). The polypeptide is 2-succinyl-5-enolpyruvyl-6-hydroxy-3-cyclohexene-1-carboxylate synthase (Histophilus somni (strain 129Pt) (Haemophilus somnus)).